A 285-amino-acid chain; its full sequence is Polyamine aminopropyltransferase (285 aa).

Residues Gln-2–Lys-237 enclose the PABS domain. Residue Gln-31 participates in S-methyl-5'-thioadenosine binding. Residue Asp-86 coordinates spermidine. S-methyl-5'-thioadenosine-binding positions include Glu-106 and Asp-137–Gly-138. Asp-155 serves as the catalytic Proton acceptor. Position 155 to 158 (Asp-155 to Asp-158) interacts with spermidine.

The protein belongs to the spermidine/spermine synthase family. Homodimer or homotetramer.

Its subcellular location is the cytoplasm. It catalyses the reaction S-adenosyl 3-(methylsulfanyl)propylamine + putrescine = S-methyl-5'-thioadenosine + spermidine + H(+). Its pathway is amine and polyamine biosynthesis; spermidine biosynthesis; spermidine from putrescine: step 1/1. Functionally, catalyzes the irreversible transfer of a propylamine group from the amino donor S-adenosylmethioninamine (decarboxy-AdoMet) to putrescine (1,4-diaminobutane) to yield spermidine. The protein is Polyamine aminopropyltransferase of Agathobacter rectalis (strain ATCC 33656 / DSM 3377 / JCM 17463 / KCTC 5835 / VPI 0990) (Eubacterium rectale).